A 74-amino-acid polypeptide reads, in one-letter code: ATP synthase subunit 9, mitochondrial (74 aa).

2 helical membrane-spanning segments follow: residues 8-28 (IGAG…GNVF) and 45-72 (LFGY…LILF).

It belongs to the ATPase C chain family. As to quaternary structure, F-type ATPases have 2 components, CF(1) - the catalytic core - and CF(0) - the membrane proton channel. CF(1) has five subunits: alpha(3), beta(3), gamma(1), delta(1), epsilon(1). CF(0) has three main subunits: a, b and c.

Its subcellular location is the mitochondrion membrane. Its function is as follows. This protein is one of the chains of the nonenzymatic membrane component (F0) of mitochondrial ATPase. The chain is ATP synthase subunit 9, mitochondrial (ATP9) from Pisum sativum (Garden pea).